Here is a 133-residue protein sequence, read N- to C-terminus: Triatox (133 aa).

The first 22 residues, methionine 1–valine 22, serve as a signal peptide directing secretion. The CUB domain maps to threonine 23–glutamate 125. Cysteines 70 and 86 form a disulfide.

It belongs to the venom CUB family. In terms of tissue distribution, expressed by the venom gland.

It is found in the secreted. Functionally, may function as an antimicrobial peptide and may be related to the innate defense of the insect in the salivary glands. This is Triatox from Triatoma infestans (Assassin bug).